The primary structure comprises 236 residues: Phosphoribosylaminoimidazole-succinocarboxamide synthase (236 aa).

This sequence belongs to the SAICAR synthetase family.

The catalysed reaction is 5-amino-1-(5-phospho-D-ribosyl)imidazole-4-carboxylate + L-aspartate + ATP = (2S)-2-[5-amino-1-(5-phospho-beta-D-ribosyl)imidazole-4-carboxamido]succinate + ADP + phosphate + 2 H(+). The protein operates within purine metabolism; IMP biosynthesis via de novo pathway; 5-amino-1-(5-phospho-D-ribosyl)imidazole-4-carboxamide from 5-amino-1-(5-phospho-D-ribosyl)imidazole-4-carboxylate: step 1/2. The chain is Phosphoribosylaminoimidazole-succinocarboxamide synthase from Pseudomonas entomophila (strain L48).